The following is a 140-amino-acid chain: HTH-type transcriptional regulator LysM (140 aa).

The region spanning 4–67 is the HTH asnC-type domain; the sequence is VDESDLKILE…ELENEIRAIV (64 aa). The H-T-H motif DNA-binding region spans 23–42; sequence YTSIAKELKISEAAVRKRIE.

In terms of assembly, homotetramer.

It is found in the cytoplasm. Its pathway is amino-acid biosynthesis; L-lysine biosynthesis via AAA pathway [regulation]. In the absence or at low concentrations of lysine, activates the biosynthesis of this amino acid via the alpha-aminoadipate (AAA) pathway. This is HTH-type transcriptional regulator LysM (lysM) from Sulfurisphaera tokodaii (strain DSM 16993 / JCM 10545 / NBRC 100140 / 7) (Sulfolobus tokodaii).